The following is a 463-amino-acid chain: Methionine aminopeptidase 2-2 (463 aa).

Positions 1–97 are disordered; that stretch reads MGSKSPEGHW…TLSVTELKQT (97 aa). Residues 27-36 are compositionally biased toward polar residues; sequence DPQTSQNGSG. The span at 46–57 shows a compositional bias: acidic residues; that stretch reads GDDDDDDEDAEE. Residues 69-85 are compositionally biased toward basic residues; sequence KKKKRKKSNKKKKKKTK. A compositionally biased stretch (polar residues) spans 86–97; it reads SGTLSVTELKQT. H215 serves as a coordination point for substrate. 3 residues coordinate a divalent metal cation: D236, D247, and H316. A substrate-binding site is contributed by H324. 2 residues coordinate a divalent metal cation: E349 and E444.

This sequence belongs to the peptidase M24A family. Methionine aminopeptidase eukaryotic type 2 subfamily. Co(2+) is required as a cofactor. It depends on Zn(2+) as a cofactor. Requires Mn(2+) as cofactor. The cofactor is Fe(2+).

It localises to the cytoplasm. It catalyses the reaction Release of N-terminal amino acids, preferentially methionine, from peptides and arylamides.. Functionally, cotranslationally removes the N-terminal methionine from nascent proteins. The N-terminal methionine is often cleaved when the second residue in the primary sequence is small and uncharged (Met-Ala-, Cys, Gly, Pro, Ser, Thr, or Val). In Neosartorya fischeri (strain ATCC 1020 / DSM 3700 / CBS 544.65 / FGSC A1164 / JCM 1740 / NRRL 181 / WB 181) (Aspergillus fischerianus), this protein is Methionine aminopeptidase 2-2.